The sequence spans 155 residues: Transcriptional repressor NrdR (155 aa).

Polar residues predominate over residues 1–11 (MECPNCHQNAS). The disordered stretch occupies residues 1-22 (MECPNCHQNASRVIDSRPSDEN). A zinc finger lies at 3 to 34 (CPNCHQNASRVIDSRPSDENRAIRRRRECENC). Residues 49 to 139 (LLVIKNDGTR…IYREFKDMSS (91 aa)) form the ATP-cone domain.

The protein belongs to the NrdR family. Zn(2+) is required as a cofactor.

Functionally, negatively regulates transcription of bacterial ribonucleotide reductase nrd genes and operons by binding to NrdR-boxes. The protein is Transcriptional repressor NrdR of Lactobacillus helveticus (strain DPC 4571).